Here is a 219-residue protein sequence, read N- to C-terminus: tRNA (guanine-N(7)-)-methyltransferase (219 aa).

S-adenosyl-L-methionine is bound by residues Glu46, Glu71, Asn100, and Asp122. Asp122 is a catalytic residue. Residues Lys126, Asp158, and 199–202 (TEYE) contribute to the substrate site.

Belongs to the class I-like SAM-binding methyltransferase superfamily. TrmB family.

It carries out the reaction guanosine(46) in tRNA + S-adenosyl-L-methionine = N(7)-methylguanosine(46) in tRNA + S-adenosyl-L-homocysteine. It functions in the pathway tRNA modification; N(7)-methylguanine-tRNA biosynthesis. Its function is as follows. Catalyzes the formation of N(7)-methylguanine at position 46 (m7G46) in tRNA. The polypeptide is tRNA (guanine-N(7)-)-methyltransferase (Leuconostoc mesenteroides subsp. mesenteroides (strain ATCC 8293 / DSM 20343 / BCRC 11652 / CCM 1803 / JCM 6124 / NCDO 523 / NBRC 100496 / NCIMB 8023 / NCTC 12954 / NRRL B-1118 / 37Y)).